A 562-amino-acid chain; its full sequence is Transmembrane E3 ubiquitin-protein ligase FLY1 (562 aa).

An N-terminal signal peptide occupies residues 1–32 (MKKREHLGLGFFEWQIILWLSIWLAISQQALG). Residues 33 to 262 (LRPIREKPRS…TSVNVEVYYN (230 aa)) lie on the Lumenal side of the membrane. Residues 263–283 (KAVNYTLMVTFVSFLQVLLLI) form a helical membrane-spanning segment. The Cytoplasmic segment spans residues 284 to 297 (RQMEHGNTQSGAAK). Residues 298 to 318 (VSIVMIGQQAIMDAYLCLLHL) traverse the membrane as a helical segment. The Lumenal segment spans residues 319–321 (TAG). A helical transmembrane segment spans residues 322 to 342 (ILVESLFNAFATAAFFKFVVF). Residues 343–373 (SIFEMRYLLAIWKATRPSNSGEGWETMRREL) are Cytoplasmic-facing. The helical transmembrane segment at 374 to 394 (SFLYSRFYGILLGGILIMYQF) threads the bilayer. Residues 395 to 397 (HNY) lie on the Lumenal side of the membrane. A helical transmembrane segment spans residues 398-418 (MQPILLLMYSFWIPQIVANVV). Residues 419-426 (RDSRKPLH) are Cytoplasmic-facing. Residues 427–447 (PYYILGMTATRLAIPLYVFGC) form a helical membrane-spanning segment. The Lumenal segment spans residues 448–458 (PHNFMRVEPNK). Residues 459 to 479 (VWCICLCTFMGLQAVILLLQH) traverse the membrane as a helical segment. Topologically, residues 480-562 (YFGSRCFVPR…PTCRRSLPPA (83 aa)) are cytoplasmic. The RING-type; atypical zinc finger occupies 512-556 (CVICMTAIDLRQHTSDCMVTPCEHFFHSGCLQRWMDIKMECPTCR).

Highly expressed in stems. Expressed in root xylem and seed coat.

Its subcellular location is the endomembrane system. It carries out the reaction S-ubiquitinyl-[E2 ubiquitin-conjugating enzyme]-L-cysteine + [acceptor protein]-L-lysine = [E2 ubiquitin-conjugating enzyme]-L-cysteine + N(6)-ubiquitinyl-[acceptor protein]-L-lysine.. Its pathway is protein modification; protein ubiquitination. In terms of biological role, E3 ubiquitin-protein ligase that regulates the degree of methylesterification of pectin in seed mucilage. May be involved in the recycling of pectin methylesterase enzymes in the endomembrane system of seed coat epidermal cells. Possesses E3 ubiquitin-protein ligase activity in vitro when associated with the E1 enzyme UBA1 and the E2 enzyme UBC8. May be involved in xylem development. The chain is Transmembrane E3 ubiquitin-protein ligase FLY1 from Arabidopsis thaliana (Mouse-ear cress).